Here is a 567-residue protein sequence, read N- to C-terminus: Glutamine-dependent NAD(+) synthetase (567 aa).

Residues 2-242 (LNLTLAQLNF…EDILTVTLDL (241 aa)) form the CN hydrolase domain. Glu41 (proton acceptor; for glutaminase activity) is an active-site residue. Residue Lys109 is the For glutaminase activity of the active site. Residue Tyr115 coordinates L-glutamine. Cys145 functions as the Nucleophile; for glutaminase activity in the catalytic mechanism. Ser172 and Lys178 together coordinate L-glutamine. The tract at residues 287–567 (PKEEEEIYAA…RMPVTNKFFK (281 aa)) is ligase. Position 316–323 (316–323 (GLSGGIDS)) interacts with ATP. Deamido-NAD(+) is bound at residue Asn399. Thr423 contributes to the ATP binding site. The deamido-NAD(+) site is built by Glu428 and Lys538.

It in the C-terminal section; belongs to the NAD synthetase family.

The enzyme catalyses deamido-NAD(+) + L-glutamine + ATP + H2O = L-glutamate + AMP + diphosphate + NAD(+) + H(+). Its pathway is cofactor biosynthesis; NAD(+) biosynthesis; NAD(+) from deamido-NAD(+) (L-Gln route): step 1/1. Functionally, catalyzes the ATP-dependent amidation of deamido-NAD to form NAD. Uses L-glutamine as a nitrogen source. This Aquifex aeolicus (strain VF5) protein is Glutamine-dependent NAD(+) synthetase.